Consider the following 377-residue polypeptide: WAT1-related protein At3g56620 (377 aa).

A run of 10 helical transmembrane segments spans residues 13-33, 40-60, 67-87, 102-122, 142-162, 183-203, 210-230, 235-255, 274-294, and 299-319; these read FAMVCLQFGYAGMNLVTKVVL, YVLVAYRNAFATAAIAPFALL, PKMTFPIFMQIFVLALLGPLI, TFAGAVTNIVPALTFIISIIC, LVIVVGAMLMILFKIPLITFL, VFLLIASFSWASFFVLQAATL, LSLSTMVCFMGTLQSTALTFV, LSAWNIGFDMNLLASAYAGIM, IFVTAFNPLVVIIGSIIGFLI, and LNLGGVLGMAILVVGVCTVLW. 2 consecutive EamA domains span residues 22–152 and 190–318; these read YAGM…MLMI and FSWA…CTVL.

Belongs to the drug/metabolite transporter (DMT) superfamily. Plant drug/metabolite exporter (P-DME) (TC 2.A.7.4) family.

The protein resides in the membrane. This is WAT1-related protein At3g56620 from Arabidopsis thaliana (Mouse-ear cress).